The following is a 143-amino-acid chain: MYENKMNLEFVSKSQNEAFARVAVAAFIAQLDPTIDEISDVKTAVSEAVTNSIIHGYENKEDGIIKIEVEICDGEVTIEITDNGKGIEDIPKVMEPLYTSRPDLERSGMGFTVMETFMDGLLVESEKEKGTRVRMKKKFNILS.

The protein belongs to the anti-sigma-factor family.

It catalyses the reaction L-seryl-[protein] + ATP = O-phospho-L-seryl-[protein] + ADP + H(+). The enzyme catalyses L-threonyl-[protein] + ATP = O-phospho-L-threonyl-[protein] + ADP + H(+). Binds to sigma F and blocks its ability to form an RNA polymerase holoenzyme (E-sigma F). Phosphorylates SpoIIAA on a serine residue. This phosphorylation may enable SpoIIAA to act as an anti-anti-sigma factor that counteracts SpoIIAB and thus releases sigma F from inhibition. The sequence is that of Anti-sigma F factor from Clostridium botulinum (strain Alaska E43 / Type E3).